A 282-amino-acid chain; its full sequence is Transformer-2 protein homolog alpha (282 aa).

Residues 1 to 118 (MSDVEENNFE…TGSRANPDPN (118 aa)) form a disordered region. An N-acetylserine modification is found at Ser-2. Phosphoserine is present on residues Ser-2 and Ser-14. At Thr-24 the chain carries Phosphothreonine. The segment covering 51 to 84 (RSRSKSRSRSRRHSHRRYTRSRSHSHSHRRRSRS) has biased composition (basic residues). Residues Ser-82, Ser-84, and Ser-86 each carry the phosphoserine modification. Phosphothreonine is present on Thr-88. Residues 92 to 110 (RRRRSRSHSPMSNRRRHTG) show a composition bias toward basic residues. Ser-96 and Ser-98 each carry phosphoserine. One can recognise an RRM domain in the interval 119–197 (TCLGVFGLSL…RRIRVDYSIT (79 aa)). A Glycyl lysine isopeptide (Lys-Gly) (interchain with G-Cter in SUMO2) cross-link involves residue Lys-198. The interval 198–225 (KRAHTPTPGIYMGRPTHSGGGGGGGGGG) is linker. Disordered regions lie at residues 201–245 (HTPT…YDRG) and 260–282 (SPSP…PRRY). A phosphothreonine mark is found at Thr-202 and Thr-204. Positions 215–230 (SGGGGGGGGGGGGGGG) are enriched in gly residues. At Arg-232 the chain carries Omega-N-methylarginine. A compositionally biased stretch (basic and acidic residues) spans 232 to 245 (RRRDSYYDRGYDRG). At Ser-236 the chain carries Phosphoserine. A compositionally biased stretch (basic residues) spans 268-282 (YRSRSRSRSYSPRRY).

It belongs to the splicing factor SR family. As to quaternary structure, binds to A3 enhancer proteins SRp75, SRp55, SRp40 and SRp30. Interacts with ILDR1 (via C-terminus) and ILDR2. In terms of processing, phosphorylated in the RS domains.

It localises to the nucleus. Functionally, sequence-specific RNA-binding protein which participates in the control of pre-mRNA splicing. This is Transformer-2 protein homolog alpha from Homo sapiens (Human).